The following is a 662-amino-acid chain: Protein Aster-C (662 aa).

Residues Met-1 to Val-33 are disordered. In terms of domain architecture, GRAM spans Glu-70 to Val-176. The disordered stretch occupies residues Val-212–Lys-294. The span at Val-240 to Ala-250 shows a compositional bias: polar residues. Residues Leu-265–Val-276 show a composition bias toward basic and acidic residues. The VASt domain maps to Gln-326–Ser-497. A disordered region spans residues His-506–Arg-530. Positions Ser-507–Leu-516 are enriched in basic residues. Residues Leu-557–Leu-577 traverse the membrane as a helical segment.

In terms of tissue distribution, highly expressed in the liver. Also found in the testis.

The protein localises to the endoplasmic reticulum membrane. It localises to the cell membrane. Its function is as follows. Cholesterol transporter that mediates non-vesicular transport of cholesterol from the plasma membrane (PM) to the endoplasmic reticulum (ER). Contains unique domains for binding cholesterol and the PM, thereby serving as a molecular bridge for the transfer of cholesterol from the PM to the ER. Plays a crucial role in cholesterol homeostasis and has the unique ability to localize to the PM based on the level of membrane cholesterol. In lipid-poor conditions localizes to the ER membrane and in response to excess cholesterol in the PM is recruited to the endoplasmic reticulum-plasma membrane contact sites (EPCS) which is mediated by the GRAM domain. At the EPCS, the sterol-binding VASt/ASTER domain binds to the cholesterol in the PM and facilitates its transfer from the PM to ER. This Mus musculus (Mouse) protein is Protein Aster-C (Gramd1c).